The following is a 448-amino-acid chain: C4-dicarboxylate transport protein (448 aa).

A run of 8 helical transmembrane segments spans residues 20-38 (LYFQVLVAIIAGIALGHFY), 53-75 (IRLVKMIIAPVIFLTVATGIAGM), 88-110 (AMIYFLVFSTLALIVGLIVANTV), 161-178 (ILQVLFFSVLFGIALGIV), 199-220 (LVAILMKAAPIGAFGAMAFTIG), 230-252 (LAMLIGTFYITSALFVFVVLGAV), 325-347 (LFIAQATGIHLSFGEQILLLLVA), and 362-384 (FITLAATLSVVPSVPVAGMALIL).

It belongs to the dicarboxylate/amino acid:cation symporter (DAACS) (TC 2.A.23) family.

It is found in the cell inner membrane. In terms of biological role, responsible for the transport of dicarboxylates such as succinate, fumarate, and malate from the periplasm across the membrane. This Agrobacterium fabrum (strain C58 / ATCC 33970) (Agrobacterium tumefaciens (strain C58)) protein is C4-dicarboxylate transport protein.